Consider the following 254-residue polypeptide: MKIDLNCDLGEGYGAWQMGDDAAMMSIATSVNIACGFHAGDPDIMHKTVTMAKAHGVSIGAHPGFRDLHGFGRRPVPGITAAEIENLVAYQIGALQAVAALAGHKVTHVKAHGALSNVACEDDMTARAVAAAIKAVDPKLIFVVLANSKLVDAGEAAGLAMAHEVFADRTYEDDGNLVSRRKPGAVLHDAREIAQRVVRMVQDGAVVSVTGKIIKMRIDTVCIHGDTPGAVDIARGVRLALEERGATVVPFARR.

The protein belongs to the LamB/PxpA family. In terms of assembly, forms a complex composed of PxpA, PxpB and PxpC.

The enzyme catalyses 5-oxo-L-proline + ATP + 2 H2O = L-glutamate + ADP + phosphate + H(+). Its function is as follows. Catalyzes the cleavage of 5-oxoproline to form L-glutamate coupled to the hydrolysis of ATP to ADP and inorganic phosphate. In Rhodopseudomonas palustris (strain BisB5), this protein is 5-oxoprolinase subunit A.